The sequence spans 368 residues: tRNA/tmRNA (uracil-C(5))-methyltransferase (368 aa).

S-adenosyl-L-methionine-binding residues include Gln192, Tyr220, Asn225, Glu241, and Asp301. The Nucleophile role is filled by Cys326. The active-site Proton acceptor is the Glu360.

It belongs to the class I-like SAM-binding methyltransferase superfamily. RNA M5U methyltransferase family. TrmA subfamily.

The catalysed reaction is uridine(54) in tRNA + S-adenosyl-L-methionine = 5-methyluridine(54) in tRNA + S-adenosyl-L-homocysteine + H(+). It catalyses the reaction uridine(341) in tmRNA + S-adenosyl-L-methionine = 5-methyluridine(341) in tmRNA + S-adenosyl-L-homocysteine + H(+). In terms of biological role, dual-specificity methyltransferase that catalyzes the formation of 5-methyluridine at position 54 (m5U54) in all tRNAs, and that of position 341 (m5U341) in tmRNA (transfer-mRNA). This is tRNA/tmRNA (uracil-C(5))-methyltransferase from Actinobacillus pleuropneumoniae serotype 3 (strain JL03).